We begin with the raw amino-acid sequence, 121 residues long: Basic phospholipase A2 BbTX-III (121 aa).

Tyr27, Gly29, and Gly31 together coordinate Ca(2+). Intrachain disulfides connect Cys28–Cys44, Cys43–Cys95, Cys49–Cys121, Cys50–Cys88, Cys58–Cys82, and Cys76–Cys86. His47 is an active-site residue. Position 48 (Asp48) interacts with Ca(2+). Asp89 is a catalytic residue.

This sequence belongs to the phospholipase A2 family. Group II subfamily. D49 sub-subfamily. In terms of assembly, homodimer; non-covalently linked. Ca(2+) is required as a cofactor. In terms of tissue distribution, expressed by the venom gland.

The protein localises to the secreted. It carries out the reaction a 1,2-diacyl-sn-glycero-3-phosphocholine + H2O = a 1-acyl-sn-glycero-3-phosphocholine + a fatty acid + H(+). Functionally, snake venom phospholipase A2 (PLA2) that exhibits myotoxin and anticoagulant activity. Displays edema-inducing activities in mouse paw. Also displays cytotoxic activity against some cell lines and myotubes, and antimicrobial activities against E.coli, C.albicans and Leishmania. PLA2 catalyzes the calcium-dependent hydrolysis of the 2-acyl groups in 3-sn-phosphoglycerides. This is Basic phospholipase A2 BbTX-III from Bothrops brazili (Brazil's lancehead).